We begin with the raw amino-acid sequence, 98 residues long: Small ribosomal subunit protein bS18 (98 aa).

This sequence belongs to the bacterial ribosomal protein bS18 family. In terms of assembly, part of the 30S ribosomal subunit. Forms a tight heterodimer with protein bS6.

In terms of biological role, binds as a heterodimer with protein bS6 to the central domain of the 16S rRNA, where it helps stabilize the platform of the 30S subunit. The chain is Small ribosomal subunit protein bS18 from Flavobacterium johnsoniae (strain ATCC 17061 / DSM 2064 / JCM 8514 / BCRC 14874 / CCUG 350202 / NBRC 14942 / NCIMB 11054 / UW101) (Cytophaga johnsonae).